Reading from the N-terminus, the 677-residue chain is Methionine--tRNA ligase (677 aa).

The short motif at proline 15 to histidine 25 is the 'HIGH' region element. The Zn(2+) site is built by cysteine 146, cysteine 149, cysteine 159, and cysteine 162. The 'KMSKS' region signature appears at lysine 333–serine 337. Position 336 (lysine 336) interacts with ATP. Positions aspartate 575–lysine 677 constitute a tRNA-binding domain.

It belongs to the class-I aminoacyl-tRNA synthetase family. MetG type 1 subfamily. Homodimer. Requires Zn(2+) as cofactor.

It localises to the cytoplasm. It carries out the reaction tRNA(Met) + L-methionine + ATP = L-methionyl-tRNA(Met) + AMP + diphosphate. In terms of biological role, is required not only for elongation of protein synthesis but also for the initiation of all mRNA translation through initiator tRNA(fMet) aminoacylation. This Escherichia coli O127:H6 (strain E2348/69 / EPEC) protein is Methionine--tRNA ligase.